The primary structure comprises 483 residues: Regulatory protein ViaA (483 aa).

Belongs to the ViaA family. As to quaternary structure, homodimer. Interacts with RavA.

It is found in the cytoplasm. Its function is as follows. Component of the RavA-ViaA chaperone complex, which may act on the membrane to optimize the function of some of the respiratory chains. ViaA stimulates the ATPase activity of RavA. In Salmonella typhi, this protein is Regulatory protein ViaA.